The chain runs to 799 residues: E3 UFM1-protein ligase 1 homolog (799 aa).

The segment at 429–483 (TTTTTTTQPSKKKDNLINSDDDDNQDNNKKSSKGKNKKSKQQQSSIQKLINDSED) is disordered. Over residues 458 to 468 (KSSKGKNKKSK) the composition is skewed to basic residues. The span at 469–478 (QQQSSIQKLI) shows a compositional bias: low complexity.

It belongs to the UFL1 family.

E3 UFM1-protein ligase that mediates ufmylation of target proteins. This chain is E3 UFM1-protein ligase 1 homolog, found in Dictyostelium discoideum (Social amoeba).